A 702-amino-acid chain; its full sequence is Dynein axonemal intermediate chain 1 (702 aa).

A disordered region spans residues 1–58; it reads MLPASSKMPHKQPPPPRKQSISMGRGARKRDEDSGTEVGEGTDEWVQSKATVKPPDQL. Ser134 and Ser137 each carry phosphoserine. WD repeat units lie at residues 383-423, 432-475, 540-580, 582-622, and 630-669; these read SSES…SQPS, KHTD…LVHT, AHNM…PMFI, DLNS…YEAI, and KKKN…RKMP.

The protein belongs to the dynein intermediate chain family. Consists of at least two heavy chains and a number of intermediate and light chains. Interacts with BICD2. Interacts with CFAP45 and CFAP52. Interacts with CFAP53.

It is found in the cytoplasm. It localises to the cytoskeleton. Its subcellular location is the cilium axoneme. In terms of biological role, part of the dynein complex of respiratory cilia. This is Dynein axonemal intermediate chain 1 (DNAI1) from Bos taurus (Bovine).